Reading from the N-terminus, the 429-residue chain is Uracil permease (429 aa).

Topologically, residues 1–13 (MTRRAIGVSERPP) are cytoplasmic. A helical membrane pass occupies residues 14–37 (LLQTIPLSLQHLFAMFGATVLVPV). Over 38–41 (LFHI) the chain is Periplasmic. A helical transmembrane segment spans residues 42–61 (NPATVLLFNGIGTLLYLFIC). Residues 62–64 (KGK) lie on the Cytoplasmic side of the membrane. Residues 65–81 (IPAYLGSSFAFISPVLL) traverse the membrane as a discontinuously helical segment. A uracil-binding site is contributed by Phe-73. The Periplasmic segment spans residues 82–89 (LLPLGYEV). The chain crosses the membrane as a helical span at residues 90–110 (ALGGFIMCGVLFCLVSFIVKK). At 111–122 (AGTGWLDVLFPP) the chain is on the cytoplasmic side. Residues 123-144 (AAMGAIVAVIGLELAGVAAGMA) traverse the membrane as a helical segment. Residues 145–155 (GLLPAEGQTPD) lie on the Periplasmic side of the membrane. A helical membrane pass occupies residues 156–171 (SKTIIISITTLAVTVL). The Cytoplasmic segment spans residues 172-178 (GSVLFRG). A helical transmembrane segment spans residues 179-199 (FLAIIPILIGVLVGYALSFAM). At 200–224 (GIVDTTPIINAHWFALPTLYTPRFE) the chain is on the periplasmic side. A helical membrane pass occupies residues 225-248 (WFAILTILPAALVVIAEHVGHLVV). Glu-241 contributes to the uracil binding site. Residues 249–261 (TANIVKKDLLRDP) are Cytoplasmic-facing. A helical transmembrane segment spans residues 262-281 (GLHRSMFANGLSTVISGFFG). A discontinuously helical membrane pass occupies residues 282-298 (STPNTTYGENIGVMAIT). The uracil site is built by Gly-289 and Glu-290. Over 299 to 301 (RVY) the chain is Cytoplasmic. A helical membrane pass occupies residues 302-319 (STWVIGGAAIFAILLSCV). Topologically, residues 320-332 (GKLAAAIQMIPLP) are periplasmic. A helical transmembrane segment spans residues 333–354 (VMGGVSLLLYGVIGASGIRVLI). The Cytoplasmic portion of the chain corresponds to 355–365 (ESKVDYNKAQN). Residues 366-401 (LILTSVILIIGVSGAKVNIGAAELKGMALATIVGIG) constitute an intramembrane region (discontinuously helical). At 402–429 (LSLIFKLISVLRPEEVVLDAEDADITDK) the chain is on the cytoplasmic side.

This sequence belongs to the nucleobase:cation symporter-2 (NCS2) (TC 2.A.40) family.

The protein resides in the cell inner membrane. It carries out the reaction uracil(in) + H(+)(in) = uracil(out) + H(+)(out). Its function is as follows. Transport of uracil in the cell. The polypeptide is Uracil permease (uraA) (Escherichia coli O157:H7).